The following is a 268-amino-acid chain: Malonyl-[acyl-carrier protein] O-methyltransferase (268 aa).

It belongs to the methyltransferase superfamily.

The enzyme catalyses malonyl-[ACP] + S-adenosyl-L-methionine = malonyl-[ACP] methyl ester + S-adenosyl-L-homocysteine. Its pathway is cofactor biosynthesis; biotin biosynthesis. Converts the free carboxyl group of a malonyl-thioester to its methyl ester by transfer of a methyl group from S-adenosyl-L-methionine (SAM). It allows to synthesize pimeloyl-ACP via the fatty acid synthetic pathway. The protein is Malonyl-[acyl-carrier protein] O-methyltransferase of Prosthecochloris aestuarii (strain DSM 271 / SK 413).